We begin with the raw amino-acid sequence, 112 residues long: 2Fe-2S ferredoxin (112 aa).

The 2Fe-2S ferredoxin-type domain maps to 5-107 (IKVTFIINDG…GIKVRIPATT (103 aa)). [2Fe-2S] cluster-binding residues include Cys42, Cys48, Cys51, and Cys88.

This sequence belongs to the adrenodoxin/putidaredoxin family. Requires [2Fe-2S] cluster as cofactor.

Its function is as follows. Ferredoxin are iron-sulfur proteins that transfer electrons in a wide variety of metabolic reactions. The sequence is that of 2Fe-2S ferredoxin (fdxB) from Rickettsia conorii (strain ATCC VR-613 / Malish 7).